Here is a 378-residue protein sequence, read N- to C-terminus: Chaperone protein DnaJ (378 aa).

In terms of domain architecture, J spans 5–72; it reads DFYEVLGVPK…QKRAAYDQFG (68 aa). The segment at 138–216 adopts a CR-type zinc-finger fold; sequence GKEAQIRIPS…CHGQGKVKKQ (79 aa). Residues cysteine 151, cysteine 154, cysteine 168, cysteine 171, cysteine 190, cysteine 193, cysteine 204, and cysteine 207 each coordinate Zn(2+). CXXCXGXG motif repeat units follow at residues 151 to 158, 168 to 175, 190 to 197, and 204 to 211; these read CETCHGSG, CTTCSGTG, CPHCRGTG, and CVTCHGQG. Residues 354–378 form a disordered region; that stretch reads SLKKGGGKHSPSGESWTDRLKNLFT. The segment covering 369–378 has biased composition (basic and acidic residues); the sequence is WTDRLKNLFT.

This sequence belongs to the DnaJ family. As to quaternary structure, homodimer. Zn(2+) serves as cofactor.

The protein resides in the cytoplasm. Participates actively in the response to hyperosmotic and heat shock by preventing the aggregation of stress-denatured proteins and by disaggregating proteins, also in an autonomous, DnaK-independent fashion. Unfolded proteins bind initially to DnaJ; upon interaction with the DnaJ-bound protein, DnaK hydrolyzes its bound ATP, resulting in the formation of a stable complex. GrpE releases ADP from DnaK; ATP binding to DnaK triggers the release of the substrate protein, thus completing the reaction cycle. Several rounds of ATP-dependent interactions between DnaJ, DnaK and GrpE are required for fully efficient folding. Also involved, together with DnaK and GrpE, in the DNA replication of plasmids through activation of initiation proteins. This chain is Chaperone protein DnaJ, found in Paracidovorax citrulli (strain AAC00-1) (Acidovorax citrulli).